A 136-amino-acid polypeptide reads, in one-letter code: Histone H2B.5 (136 aa).

Residues 1–36 are compositionally biased toward basic and acidic residues; sequence MAPKAEKKPAAEKKPVETEKKPKAEKRVPGKDGGAD. Residues 1–44 are disordered; it reads MAPKAEKKPAAEKKPVETEKKPKAEKRVPGKDGGADKKKKKAKK. N6-acetyllysine occurs at positions 7 and 26. Lys-132 is covalently cross-linked (Glycyl lysine isopeptide (Lys-Gly) (interchain with G-Cter in ubiquitin)).

The protein belongs to the histone H2B family. The nucleosome is a histone octamer containing two molecules each of H2A, H2B, H3 and H4 assembled in one H3-H4 heterotetramer and two H2A-H2B heterodimers. The octamer wraps approximately 147 bp of DNA. Post-translationally, can be acetylated to form H2BK6ac and H2BK33ac. Monoubiquitinated to form H2BK143ub1; may give a specific tag for epigenetic transcriptional activation.

It localises to the nucleus. The protein resides in the chromosome. Core component of nucleosome. Nucleosomes wrap and compact DNA into chromatin, limiting DNA accessibility to the cellular machineries which require DNA as a template. Histones thereby play a central role in transcription regulation, DNA repair, DNA replication and chromosomal stability. DNA accessibility is regulated via a complex set of post-translational modifications of histones, also called histone code, and nucleosome remodeling. The chain is Histone H2B.5 from Triticum aestivum (Wheat).